We begin with the raw amino-acid sequence, 274 residues long: Transcriptional activator PerA (274 aa).

Residues 168–265 enclose the HTH araC/xylS-type domain; that stretch reads DRVIKVIELD…NTTPKKYNGV (98 aa). 2 DNA-binding regions (H-T-H motif) span residues 185 to 206 and 232 to 255; these read GDVS…NKEN and IDEI…KEYY.

Functionally, could help in the transcriptional activator of eaeA expression in enteropathogenic E.coli. However, it seems that it is PerC which acts as an activator. In Escherichia coli O127:H6 (strain E2348/69 / EPEC), this protein is Transcriptional activator PerA (perA).